Consider the following 509-residue polypeptide: Zinc finger protein Aiolos (509 aa).

Residues 1-19 show a composition bias toward polar residues; the sequence is MEDIQTNAELKSTQEQSVP. The disordered stretch occupies residues 1 to 86; that stretch reads MEDIQTNAEL…MGNAEEPEIP (86 aa). Ser22 and Ser42 each carry phosphoserine. Basic and acidic residues predominate over residues 56 to 72; the sequence is DSMKVKDEYSERDENVL. Glycyl lysine isopeptide (Lys-Gly) (interchain with G-Cter in SUMO2) cross-links involve residues Lys61, Lys73, and Lys100. C2H2-type zinc fingers lie at residues 118–140, 146–168, and 174–196; these read MNCD…KRSH, FQCN…IKLH, and FKCH…LRTH. The C2H2-type 4; atypical zinc finger occupies 202–224; sequence YKCEFCGRSYKQRSSLEEHKERC. Lys245 is covalently cross-linked (Glycyl lysine isopeptide (Lys-Gly) (interchain with G-Cter in SUMO2)). Thr326 is subject to Phosphothreonine. Residues 364–394 form a disordered region; it reads IHLPEKSVPSERGLSPNNSGHDSTDTDSNHE. Ser378 carries the phosphoserine modification. Over residues 385–394 the composition is skewed to basic and acidic residues; sequence DSTDTDSNHE. The C2H2-type 5 zinc-finger motif lies at 452–474; sequence YRCDHCRVLFLDYVMFTIHMGCH. The tract at residues 452–504 is mediates homodimerization and heterodimerization; that stretch reads YRCDHCRVLFLDYVMFTIHMGCHGFRDPFECNMCGYRSHDRYEFSSHIARGEH. The C2H2-type 6; atypical zinc finger occupies 480–504; the sequence is FECNMCGYRSHDRYEFSSHIARGEH.

It belongs to the Ikaros C2H2-type zinc-finger protein family. As to quaternary structure, homodimer. Heterodimer with other IKAROS family members. Interacts with IKZF4 and IKZF5. Interacts with IKZF1. Interacts with HRAS. Interacts with FOXP3; this interaction may be required for silencing target genes and regulating the suppressive activity of FOXP3-positive regulatory T-cells (Treg). Interacts with BCL21L isoform Bcl-X(L); this interaction blocks the anti-apoptotic role of BCL21L. Associates with histone deacetylase complexes containing HDAC1, MTA2 and SIN3A. Post-translationally, phosphorylation on tyrosine residues induced by IL2 is required for dissociation from HRAS and nuclear translocation of IKZF3 in T-cells. Phosphorylation on tyrosine residues induced by IL4 is required for dissociation from Bcl-X(L) in T-cells. In terms of tissue distribution, expressed most strongly in peripheral blood leukocytes, the spleen, and the thymus.

Its subcellular location is the nucleus. It localises to the cytoplasm. Transcription factor that plays an important role in the regulation of lymphocyte differentiation. Plays an essential role in regulation of B-cell differentiation, proliferation and maturation to an effector state. Involved in regulating BCL2 expression and controlling apoptosis in T-cells in an IL2-dependent manner. The polypeptide is Zinc finger protein Aiolos (IKZF3) (Homo sapiens (Human)).